The sequence spans 379 residues: Cobalt-precorrin-5B C(1)-methyltransferase (379 aa).

The protein belongs to the CbiD family.

The enzyme catalyses Co-precorrin-5B + S-adenosyl-L-methionine = Co-precorrin-6A + S-adenosyl-L-homocysteine. The protein operates within cofactor biosynthesis; adenosylcobalamin biosynthesis; cob(II)yrinate a,c-diamide from sirohydrochlorin (anaerobic route): step 6/10. In terms of biological role, catalyzes the methylation of C-1 in cobalt-precorrin-5B to form cobalt-precorrin-6A. This chain is Cobalt-precorrin-5B C(1)-methyltransferase, found in Salmonella arizonae (strain ATCC BAA-731 / CDC346-86 / RSK2980).